Consider the following 258-residue polypeptide: Type III pantothenate kinase (258 aa).

Asp6–Val13 lines the ATP pocket. Substrate is bound by residues Tyr100 and Gly107–Arg110. The Proton acceptor role is filled by Asp109. Residue Asp129 participates in K(+) binding. Thr132 serves as a coordination point for ATP. A substrate-binding site is contributed by Thr184.

This sequence belongs to the type III pantothenate kinase family. As to quaternary structure, homodimer. NH4(+) is required as a cofactor. Requires K(+) as cofactor.

The protein resides in the cytoplasm. The enzyme catalyses (R)-pantothenate + ATP = (R)-4'-phosphopantothenate + ADP + H(+). The protein operates within cofactor biosynthesis; coenzyme A biosynthesis; CoA from (R)-pantothenate: step 1/5. Functionally, catalyzes the phosphorylation of pantothenate (Pan), the first step in CoA biosynthesis. The protein is Type III pantothenate kinase of Geobacillus sp. (strain WCH70).